The following is a 236-amino-acid chain: uncharacterized protein (236 aa).

This sequence belongs to the RHS family.

This is an uncharacterized protein from Escherichia coli (strain K12).